Consider the following 284-residue polypeptide: Proteasome subunit beta 1 (284 aa).

Positions 1–56 (MASHDSYTGRLPGAFMNPGTSSFTEFLASYNPDLLPGRHMTALAGGMPGNVEAPHA) are cleaved as a propeptide — removed in mature form; by autocatalysis. The active-site Nucleophile is the T57.

Belongs to the peptidase T1B family. In terms of assembly, the 20S proteasome core is composed of 14 alpha and 14 beta subunits that assemble into four stacked heptameric rings, resulting in a barrel-shaped structure. The two inner rings, each composed of seven catalytic beta subunits, are sandwiched by two outer rings, each composed of seven alpha subunits. The catalytic chamber with the active sites is on the inside of the barrel. Has a gated structure, the ends of the cylinder being occluded by the N-termini of the alpha-subunits. Is capped by the proteasome-associated ATPase, ARC.

The protein resides in the cytoplasm. It carries out the reaction Cleavage of peptide bonds with very broad specificity.. It participates in protein degradation; proteasomal Pup-dependent pathway. Its activity is regulated as follows. The formation of the proteasomal ATPase ARC-20S proteasome complex, likely via the docking of the C-termini of ARC into the intersubunit pockets in the alpha-rings, may trigger opening of the gate for substrate entry. Interconversion between the open-gate and close-gate conformations leads to a dynamic regulation of the 20S proteasome proteolysis activity. Functionally, component of the proteasome core, a large protease complex with broad specificity involved in protein degradation. This Thermomonospora curvata (strain ATCC 19995 / DSM 43183 / JCM 3096 / KCTC 9072 / NBRC 15933 / NCIMB 10081 / Henssen B9) protein is Proteasome subunit beta 1.